Reading from the N-terminus, the 201-residue chain is NAD(P)H dehydrogenase (quinone) (201 aa).

The Flavodoxin-like domain maps to 4–191 (VLVLYYSMYG…KIAKCQGVHV (188 aa)). Residues 10–15 (SMYGHV) and 79–81 (TRF) each bind FMN. Tyr12 is an NAD(+) binding site. A substrate-binding site is contributed by Trp99. FMN-binding positions include 114–120 (STGTQHG) and His135.

This sequence belongs to the WrbA family. It depends on FMN as a cofactor.

It carries out the reaction a quinone + NADH + H(+) = a quinol + NAD(+). The enzyme catalyses a quinone + NADPH + H(+) = a quinol + NADP(+). This is NAD(P)H dehydrogenase (quinone) from Hydrogenovibrio crunogenus (strain DSM 25203 / XCL-2) (Thiomicrospira crunogena).